Here is a 377-residue protein sequence, read N- to C-terminus: MSDGIVIIGSGFAARQLVKNIRKQDTQIPLTLIAADSMDEYNKPDLSHVISRGQKADDLTLQSAGEFAEQYNLRLFPHTWVSDIDAENRLVKSQDNQWRYDKLVLATGATPFIPPVPGRELMLTLNSQREYGAAQSQLHDAKRVLIVGGGLIGCELAMDFCRAGKAVTVVDNSASVLAALMPPEASSRLQHRLTEMGVHLMLKAQLEGLEQTADGIRVSLDRQRAITVDAVVAAAGLRPETSLARHAGLQINRGVVVNNQLQTSDPAIYALGDCAEINGTVLPFLQPILLSAMCLSKNLLAQAGELKLPPMLVKVKTPDLPLHLAGDTRRDDLTWNIVAAKEGLVAKGVDGENQLRAFVVSEDKMKEAFALLKQLVS.

This sequence belongs to the FAD-dependent oxidoreductase family. It depends on FAD as a cofactor.

It is found in the cytoplasm. It catalyses the reaction 2 reduced [nitric oxide reductase rubredoxin domain] + NAD(+) + H(+) = 2 oxidized [nitric oxide reductase rubredoxin domain] + NADH. The protein operates within nitrogen metabolism; nitric oxide reduction. Its function is as follows. One of at least two accessory proteins for anaerobic nitric oxide (NO) reductase. Reduces the rubredoxin moiety of NO reductase. This Klebsiella pneumoniae (strain 342) protein is Nitric oxide reductase FlRd-NAD(+) reductase.